Here is a 478-residue protein sequence, read N- to C-terminus: Transcript termination protein A18 (478 aa).

A Helicase ATP-binding domain is found at 98-254; the sequence is KLSTHRPMYM…NDVVNVLKVS (157 aa). Position 111-118 (111-118) interacts with ATP; the sequence is LSCGFGKT. The DESH box motif lies at 204–207; the sequence is DESH. One can recognise a Helicase C-terminal domain in the interval 302 to 468; sequence PRNNLIVETV…GIEGTKEEPV (167 aa).

It belongs to the helicase family. Poxviruses subfamily. Interacts with G2. Might be part of a transcription complex composed at least of G2, A18, and H5.

It localises to the virion. DNA helicase which seems to act as a postreplicative transcription termination factor. Involved in ATP-dependent release of nascent RNA. Forms a stable complex with single-stranded DNA, and to a lesser extent RNA. This is Transcript termination protein A18 from Rabbit fibroma virus (strain Kasza) (RFV).